The sequence spans 344 residues: 3-isopropylmalate dehydrogenase (344 aa).

Substrate is bound by residues Arg93, Arg103, Arg131, and Asp215. Residues Asp215, Asp239, and Asp243 each coordinate Mg(2+). NAD(+) is bound at residue Gly273–Asn285.

This sequence belongs to the isocitrate and isopropylmalate dehydrogenases family. LeuB type 1 subfamily. As to quaternary structure, homodimer. It depends on Mg(2+) as a cofactor. Mn(2+) serves as cofactor.

It is found in the cytoplasm. It catalyses the reaction (2R,3S)-3-isopropylmalate + NAD(+) = 4-methyl-2-oxopentanoate + CO2 + NADH. It participates in amino-acid biosynthesis; L-leucine biosynthesis; L-leucine from 3-methyl-2-oxobutanoate: step 3/4. Functionally, catalyzes the oxidation of 3-carboxy-2-hydroxy-4-methylpentanoate (3-isopropylmalate) to 3-carboxy-4-methyl-2-oxopentanoate. The product decarboxylates to 4-methyl-2 oxopentanoate. The chain is 3-isopropylmalate dehydrogenase from Streptococcus mutans serotype c (strain ATCC 700610 / UA159).